The following is a 408-amino-acid chain: 5-hydroxytryptamine receptor 1A (408 aa).

At 1 to 32 (MDASNNTTSWNILQRGRMGPSWRRCPVSYQII) the chain is on the extracellular side. Asn-5 and Asn-6 each carry an N-linked (GlcNAc...) asparagine glycan. The chain crosses the membrane as a helical span at residues 33-53 (ASLFLGRSFSAGIFGNACVIA). The Cytoplasmic portion of the chain corresponds to 54–67 (AIALERSLQNVANY). A helical transmembrane segment spans residues 68–92 (LIGSLAVTDLMVSVLVLPMAAQNQV). Topologically, residues 93–101 (LNKWTLGQV) are extracellular. A helical transmembrane segment spans residues 102–126 (TCDIFISLDVLCCTSSILHLCAIAL). A disulfide bridge connects residues Cys-103 and Cys-181. The serotonin site is built by Asp-110 and Cys-114. A DRY motif; important for ligand-induced conformation changes motif is present at residues 127 to 129 (DRY). The Cytoplasmic segment spans residues 127–146 (DRYWAITDPIDYVNKRTPRR). The chain crosses the membrane as a helical span at residues 147-168 (AAVLISITWIVGFSISIPPMLG). Residues 169–187 (WRTPEDRSDPNACRISEDP) lie on the Extracellular side of the membrane. The chain crosses the membrane as a helical span at residues 188 to 210 (GYTIYSTFGAFYIPLILMLVLYG). Over 211–333 (KIFKAARFRI…LARERKTVKT (123 aa)) the chain is Cytoplasmic. Residues 235-255 (TCLSVSQQSPKEKQRGAQQEL) form a disordered region. Residues Lys-332, Thr-333, and Gly-339 each contribute to the 1D-myo-inositol 4-phosphate site. The helical transmembrane segment at 334-357 (LGIIMGTFILCWLPFFIVALVLPF) threads the bilayer. Residues 358-364 (CETCHMP) are Extracellular-facing. The chain crosses the membrane as a helical span at residues 365 to 389 (HLLFDIITWLGYSNSLLNPIIYAYF). The NPxxY motif; important for ligand-induced conformation changes and signaling signature appears at 382 to 386 (NPIIY). 1D-myo-inositol 4-phosphate is bound by residues Phe-389, Asn-390, and Lys-391. The Cytoplasmic portion of the chain corresponds to 390-408 (NKDFQSAFKKIIKCKFCRQ).

The protein belongs to the G-protein coupled receptor 1 family. 5-hydroxytryptamine receptor subfamily. HTR1A sub-subfamily. As to expression, first expressed in the rostral part of the brain stem at stage 22. At later stages of development, expression is localized to serotonergic neurons. The expression pattern changes in the tadpole of stage 41 where, in addition to serotonergic neurons, expression is also localized to the inner nuclear layer (INL) of the developing retina. This expression pattern continues through to the start of metamorphosis (stage 46). In adults, expressed in the brain, in particular the telencephalon, diencephalon and mesencephalon. In the telencephalic region, expression is localized to the lateral, dorsal and medial pallium, and in the striatum, septum and amygdala. In the mesencephalic region, expression is strongest in the optic tectum and torus semicircularis with moderate levels of expression in tegmental nuclei. In diencephalon, localized to the dorsal and ventral thalamus and the preoptic area of the hypothalamus.

The protein resides in the cell membrane. Its activity is regulated as follows. G-protein coupled receptor activity is regulated by lipids: phosphatidylinositol 4-phosphate increases HTR1A-mediated activity. In terms of biological role, G-protein coupled receptor for 5-hydroxytryptamine (serotonin). Also functions as a receptor for various drugs and psychoactive substances. Ligand binding causes a conformation change that triggers signaling via guanine nucleotide-binding proteins (G proteins) and modulates the activity of downstream effectors, such as adenylate cyclase. HTR1A is coupled to G(i)/G(o) G alpha proteins and mediates inhibitory neurotransmission: signaling inhibits adenylate cyclase activity and activates a phosphatidylinositol-calcium second messenger system that regulates the release of Ca(2+) ions from intracellular stores. Beta-arrestin family members regulate signaling by mediating both receptor desensitization and resensitization processes. Activation of the receptor may play a role in the exit from G0 phase and in promoting DNA synthesis. The protein is 5-hydroxytryptamine receptor 1A of Xenopus laevis (African clawed frog).